Reading from the N-terminus, the 343-residue chain is GTPase Obg (343 aa).

Positions 1 to 159 (MKFLDEAKVY…HWLWLRLKLI (159 aa)) constitute an Obg domain. The 168-residue stretch at 160 to 327 (ADAGLVGLPN…ALRALLAAMD (168 aa)) folds into the OBG-type G domain. GTP contacts are provided by residues 166–173 (GLPNAGKS), 191–195 (FTTLH), 212–215 (DIPG), 279–282 (SKAD), and 308–310 (SAA). Mg(2+) is bound by residues S173 and T193.

Belongs to the TRAFAC class OBG-HflX-like GTPase superfamily. OBG GTPase family. In terms of assembly, monomer. Requires Mg(2+) as cofactor.

Its subcellular location is the cytoplasm. An essential GTPase which binds GTP, GDP and possibly (p)ppGpp with moderate affinity, with high nucleotide exchange rates and a fairly low GTP hydrolysis rate. Plays a role in control of the cell cycle, stress response, ribosome biogenesis and in those bacteria that undergo differentiation, in morphogenesis control. The chain is GTPase Obg from Methylobacterium sp. (strain 4-46).